The chain runs to 937 residues: von Willebrand factor (937 aa).

Positions 1–22 are cleaved as a signal peptide; that stretch reads MFPTRLARLLLAVALTLPGALC. Residues 23 to 762 constitute a propeptide that is removed on maturation; sequence GEGALGKSSM…SSPLSHRSKR (740 aa). Positions 33–201 constitute a VWFD 1 domain; sequence ARCSLFGADF…ALSSEEQRCP (169 aa). Intrachain disulfides connect Cys-35/Cys-162 and Cys-57/Cys-200. N-linked (GlcNAc...) asparagine glycans are attached at residues Asn-99, Asn-156, and Asn-211. The region spanning 294 to 347 is the TIL 1 domain; that stretch reads CPTGMEYKECVSPCHRTCRSLSITEVCREQCVDGCSCPEGQLLDEGRCVESTEC. The region spanning 385-559 is the VWFD 2 domain; that stretch reads GECLITGQSH…NSWKLRADCE (175 aa). 3 cysteine pairs are disulfide-bonded: Cys-387-Cys-523, Cys-409-Cys-558, and Cys-431-Cys-439. In terms of domain architecture, TIL 2 spans 651 to 706; the sequence is CPHGQVYQQCGTPCNLTCRSLSHPDEECTEVCLEGCFCPPGLFLDETGSCVPKAQC. Residue Asn-665 is glycosylated (N-linked (GlcNAc...) asparagine). The interval 763–786 is amino-terminal; that stretch reads SLSCRPPMVKVVCPADNPRAEGLE. 2 disulfides stabilise this stretch: Cys-766–Cys-807 and Cys-775–Cys-803. Positions 787–832 are E1; it reads CTKTCQNYDLECMSTGCVSGCLPAPGMVRHENRCVALERCPCFHQG. Residues 825 to 852 form a CX region; the sequence is RCPCFHQGREYAPGDRVKVDCNSCVCQD. The N-linked (GlcNAc...) asparagine glycan is linked to Asn-856. The region spanning 864-937 is the VWFD 3 domain; that stretch reads ASCSALGLAH…VEGGEIELFD (74 aa). Cys-913 and Cys-920 are joined by a disulfide.

In terms of assembly, multimeric. Interacts with F8. Post-translationally, all cysteine residues are involved in intrachain or interchain disulfide bonds. In terms of processing, N- and O-glycosylated. In terms of tissue distribution, plasma.

The protein localises to the secreted. Its subcellular location is the extracellular space. The protein resides in the extracellular matrix. Functionally, important in the maintenance of hemostasis, it promotes adhesion of platelets to the sites of vascular injury by forming a molecular bridge between sub-endothelial collagen matrix and platelet-surface receptor complex GPIb-IX-V. Also acts as a chaperone for coagulation factor VIII, delivering it to the site of injury, stabilizing its heterodimeric structure and protecting it from premature clearance from plasma. This Bos taurus (Bovine) protein is von Willebrand factor (VWF).